The primary structure comprises 307 residues: Homoserine kinase (307 aa).

86 to 96 (PIARGLGSSAA) contacts ATP.

This sequence belongs to the GHMP kinase family. Homoserine kinase subfamily.

It is found in the cytoplasm. The catalysed reaction is L-homoserine + ATP = O-phospho-L-homoserine + ADP + H(+). The protein operates within amino-acid biosynthesis; L-threonine biosynthesis; L-threonine from L-aspartate: step 4/5. Functionally, catalyzes the ATP-dependent phosphorylation of L-homoserine to L-homoserine phosphate. This is Homoserine kinase from Petrotoga mobilis (strain DSM 10674 / SJ95).